The primary structure comprises 534 residues: Glucans biosynthesis protein D (534 aa).

The segment at residues 1–26 is a signal peptide (tat-type signal); sequence MQRRDFIRNASLALAAFGLPSLPACA.

The protein belongs to the OpgD/OpgG family. Post-translationally, predicted to be exported by the Tat system. The position of the signal peptide cleavage has not been experimentally proven.

Its subcellular location is the periplasm. The protein operates within glycan metabolism; osmoregulated periplasmic glucan (OPG) biosynthesis. Functionally, probably involved in the control of the structural glucose backbone of osmoregulated periplasmic glucans (OPGs). This chain is Glucans biosynthesis protein D, found in Stenotrophomonas maltophilia (strain K279a).